The primary structure comprises 38 residues: Large ribosomal subunit protein bL36 (38 aa).

It belongs to the bacterial ribosomal protein bL36 family.

This chain is Large ribosomal subunit protein bL36, found in Buchnera aphidicola subsp. Schizaphis graminum (strain Sg).